The sequence spans 565 residues: Periplasmic trehalase (565 aa).

The first 30 residues, 1 to 30, serve as a signal peptide directing secretion; sequence MKSPTPSRPQKMALIPACIFLCFAALSVQA. Residues arginine 152, 159–160, asparagine 196, 205–207, 277–279, and glycine 310 each bind substrate; these read WD, RSQ, and RPE. Catalysis depends on proton donor/acceptor residues aspartate 312 and glutamate 496. Substrate is bound at residue glutamate 511. The tract at residues 539–565 is disordered; that stretch reads CDNVPATRPLSESTTQPLKQKEAEPTP.

This sequence belongs to the glycosyl hydrolase 37 family. Monomer.

It localises to the periplasm. The catalysed reaction is alpha,alpha-trehalose + H2O = alpha-D-glucose + beta-D-glucose. Provides the cells with the ability to utilize trehalose at high osmolarity by splitting it into glucose molecules that can subsequently be taken up by the phosphotransferase-mediated uptake system. The sequence is that of Periplasmic trehalase from Escherichia coli (strain SMS-3-5 / SECEC).